The chain runs to 82 residues: U-actitoxin-Avd3l (82 aa).

The N-terminal stretch at 1–16 (MVFLLCFFLVADVSYG) is a signal peptide. The 51-residue stretch at 21-71 (CLLPMDVGRCRARFPRYYYNSSSRRCEKFNYGGCGGNANNFHTLEECEKVC) folds into the BPTI/Kunitz inhibitor domain. Cystine bridges form between C21–C71, C30–C54, and C46–C67. Positions 76–82 (RDSPKEN) are excised as a propeptide.

Belongs to the venom Kunitz-type family. Sea anemone type 2 potassium channel toxin subfamily.

It is found in the secreted. The protein resides in the nematocyst. Functionally, dual-function toxin that inhibits both the serine protease trypsin and voltage-gated potassium channels Kv1.2/KCNA2. This is U-actitoxin-Avd3l from Anemonia viridis (Snakelocks anemone).